The chain runs to 249 residues: Metallo-beta-lactamase type 2 (249 aa).

A signal peptide spans 1 to 22 (MMKKMKWALVLALGLTGLNAFG). His-98, His-100, Asp-102, His-161, and Cys-180 together coordinate Zn(2+). Lys-183 serves as a coordination point for substrate. His-222 provides a ligand contact to Zn(2+).

Belongs to the metallo-beta-lactamase superfamily. Class-B beta-lactamase family. Monomer. Zn(2+) serves as cofactor.

Its subcellular location is the periplasm. The enzyme catalyses a beta-lactam + H2O = a substituted beta-amino acid. Its function is as follows. Confers resistance to the different beta-lactams antibiotics (penicillin, cephalosporin and carbapenem) via the hydrolysis of the beta-lactam ring. The polypeptide is Metallo-beta-lactamase type 2 (blaB4) (Elizabethkingia meningoseptica (Chryseobacterium meningosepticum)).